We begin with the raw amino-acid sequence, 231 residues long: Large ribosomal subunit protein uL1 (231 aa).

This sequence belongs to the universal ribosomal protein uL1 family. In terms of assembly, part of the 50S ribosomal subunit.

Binds directly to 23S rRNA. The L1 stalk is quite mobile in the ribosome, and is involved in E site tRNA release. In terms of biological role, protein L1 is also a translational repressor protein, it controls the translation of the L11 operon by binding to its mRNA. In Ectopseudomonas mendocina (strain ymp) (Pseudomonas mendocina), this protein is Large ribosomal subunit protein uL1.